We begin with the raw amino-acid sequence, 475 residues long: Ataxin-10 (475 aa).

An Omega-N-methylarginine modification is found at Arg10. Ser12 and Ser77 each carry phosphoserine. Phosphothreonine is present on Thr82. The residue at position 430 (Ser430) is a Phosphoserine.

The protein belongs to the ataxin-10 family. As to quaternary structure, homooligomer. Interacts with GNB2. Interacts with IQCB1. Interacts with OGT. Interacts with PLK1. In terms of processing, polyubiquitinated. Post-translationally, phosphorylation at Ser-12 by AURKB promotes the association of ATXN10 with PLK1. Phosphorylation at Ser-77 and Thr-82 by PLK1 may play a role in the regulation of cytokinesis and may stimulate the proteasome-mediated degradation of ATXN10. As to expression, in high cell density areas; cerebellar cortex, dentate gyrus, hippocampus, anterior olfactory nucleus, primary olfactory cortex.

The protein localises to the cytoplasm. Its subcellular location is the perinuclear region. The protein resides in the midbody. It is found in the cytoskeleton. It localises to the cilium basal body. The protein localises to the microtubule organizing center. Its subcellular location is the centrosome. The protein resides in the centriole. Functionally, may play a role in the regulation of cytokinesis. May play a role in signaling by stimulating protein glycosylation. Induces neuritogenesis by activating the Ras-MAP kinase pathway and is necessary for the survival of cerebellar neurons. Does not appear to play a major role in ciliogenesis. The chain is Ataxin-10 (Atxn10) from Mus musculus (Mouse).